Here is a 207-residue protein sequence, read N- to C-terminus: N-(5'-phosphoribosyl)anthranilate isomerase (207 aa).

The protein belongs to the TrpF family.

The catalysed reaction is N-(5-phospho-beta-D-ribosyl)anthranilate = 1-(2-carboxyphenylamino)-1-deoxy-D-ribulose 5-phosphate. Its pathway is amino-acid biosynthesis; L-tryptophan biosynthesis; L-tryptophan from chorismate: step 3/5. The chain is N-(5'-phosphoribosyl)anthranilate isomerase from Staphylococcus epidermidis (strain ATCC 35984 / DSM 28319 / BCRC 17069 / CCUG 31568 / BM 3577 / RP62A).